We begin with the raw amino-acid sequence, 269 residues long: RBPJ-interacting and tubulin-associated protein 1 (269 aa).

The Nuclear export signal signature appears at V5–L17. Disordered stretches follow at residues S37–R101 and F141–K269. Polar residues predominate over residues R62–N77. The span at S79–T93 shows a compositional bias: low complexity. The Nuclear localization signal motif lies at L92 to S108. The interaction with RBPJ/RBPSUH stretch occupies residues W128 to P156. Positions P156–K269 are interaction with tubulin.

The protein belongs to the RITA family. As to quaternary structure, interacts with RBPJ/RBPSUH.

It is found in the cytoplasm. Its subcellular location is the nucleus. The protein resides in the cytoskeleton. The protein localises to the microtubule organizing center. It localises to the centrosome. Tubulin-binding protein that acts as a negative regulator of Notch signaling pathway. Shuttles between the cytoplasm and the nucleus and mediates the nuclear export of RBPJ/RBPSUH, thereby preventing the interaction between RBPJ/RBPSUH and NICD product of Notch proteins (Notch intracellular domain), leading to down-regulate Notch-mediated transcription. May play a role in neurogenesis. This Ailuropoda melanoleuca (Giant panda) protein is RBPJ-interacting and tubulin-associated protein 1 (RITA1).